The following is a 290-amino-acid chain: ATP synthase gamma chain (290 aa).

The protein belongs to the ATPase gamma chain family. F-type ATPases have 2 components, CF(1) - the catalytic core - and CF(0) - the membrane proton channel. CF(1) has five subunits: alpha(3), beta(3), gamma(1), delta(1), epsilon(1). CF(0) has three main subunits: a, b and c.

It localises to the cell inner membrane. Functionally, produces ATP from ADP in the presence of a proton gradient across the membrane. The gamma chain is believed to be important in regulating ATPase activity and the flow of protons through the CF(0) complex. The chain is ATP synthase gamma chain from Anaeromyxobacter dehalogenans (strain 2CP-1 / ATCC BAA-258).